Consider the following 514-residue polypeptide: GMP synthase [glutamine-hydrolyzing] (514 aa).

Positions Lys7–Asn197 constitute a Glutamine amidotransferase type-1 domain. Cys84 acts as the Nucleophile in catalysis. Active-site residues include His171 and Glu173. A GMPS ATP-PPase domain is found at Trp198–Arg389. Residue Ser225–Ser231 coordinates ATP.

Homodimer.

It carries out the reaction XMP + L-glutamine + ATP + H2O = GMP + L-glutamate + AMP + diphosphate + 2 H(+). It functions in the pathway purine metabolism; GMP biosynthesis; GMP from XMP (L-Gln route): step 1/1. In terms of biological role, catalyzes the synthesis of GMP from XMP. This chain is GMP synthase [glutamine-hydrolyzing], found in Brachyspira hyodysenteriae (strain ATCC 49526 / WA1).